The following is a 485-amino-acid chain: UDP-N-acetylmuramoyl-L-alanyl-D-glutamate--2,6-diaminopimelate ligase (485 aa).

UDP-N-acetyl-alpha-D-muramoyl-L-alanyl-D-glutamate is bound at residue S28. 108–114 is an ATP binding site; it reads GTNGKTS. Residues N147, 148–149, S175, and R183 contribute to the UDP-N-acetyl-alpha-D-muramoyl-L-alanyl-D-glutamate site; that span reads TT. At K215 the chain carries N6-carboxylysine. Residues R374, 398–401, G449, and E453 each bind meso-2,6-diaminopimelate; that span reads DNPR. The short motif at 398-401 is the Meso-diaminopimelate recognition motif element; the sequence is DNPR.

The protein belongs to the MurCDEF family. MurE subfamily. Requires Mg(2+) as cofactor. Carboxylation is probably crucial for Mg(2+) binding and, consequently, for the gamma-phosphate positioning of ATP.

It is found in the cytoplasm. The enzyme catalyses UDP-N-acetyl-alpha-D-muramoyl-L-alanyl-D-glutamate + meso-2,6-diaminopimelate + ATP = UDP-N-acetyl-alpha-D-muramoyl-L-alanyl-gamma-D-glutamyl-meso-2,6-diaminopimelate + ADP + phosphate + H(+). It participates in cell wall biogenesis; peptidoglycan biosynthesis. Catalyzes the addition of meso-diaminopimelic acid to the nucleotide precursor UDP-N-acetylmuramoyl-L-alanyl-D-glutamate (UMAG) in the biosynthesis of bacterial cell-wall peptidoglycan. The sequence is that of UDP-N-acetylmuramoyl-L-alanyl-D-glutamate--2,6-diaminopimelate ligase from Fusobacterium nucleatum subsp. nucleatum (strain ATCC 25586 / DSM 15643 / BCRC 10681 / CIP 101130 / JCM 8532 / KCTC 2640 / LMG 13131 / VPI 4355).